We begin with the raw amino-acid sequence, 310 residues long: Homoserine kinase (310 aa).

91–101 (PIGSGLGSSAC) is an ATP binding site.

The protein belongs to the GHMP kinase family. Homoserine kinase subfamily.

The protein localises to the cytoplasm. The enzyme catalyses L-homoserine + ATP = O-phospho-L-homoserine + ADP + H(+). It functions in the pathway amino-acid biosynthesis; L-threonine biosynthesis; L-threonine from L-aspartate: step 4/5. In terms of biological role, catalyzes the ATP-dependent phosphorylation of L-homoserine to L-homoserine phosphate. This Shigella flexneri serotype 5b (strain 8401) protein is Homoserine kinase.